The following is a 70-amino-acid chain: Myotoxin (70 aa).

The N-terminal stretch at 1–22 (MKILYLLFAFLFLAFLSEPGNA) is a signal peptide. 3 disulfides stabilise this stretch: cysteine 26/cysteine 58, cysteine 33/cysteine 52, and cysteine 40/cysteine 59.

It belongs to the crotamine-myotoxin family. As to quaternary structure, monomer. As to expression, expressed by the venom gland.

The protein localises to the secreted. Its function is as follows. Cationic peptide that possesses multiple functions. It acts as a cell-penetrating peptide (CPP), and as a potent voltage-gated potassium channel (Kv) inhibitor. It exhibits antimicrobial activities, hind limb paralysis, and severe muscle necrosis by a non-enzymatic mechanism. This chain is Myotoxin, found in Crotalus adamanteus (Eastern diamondback rattlesnake).